Here is a 282-residue protein sequence, read N- to C-terminus: uncharacterized protein (282 aa).

This is an uncharacterized protein from Rickettsia conorii (strain ATCC VR-613 / Malish 7).